Reading from the N-terminus, the 128-residue chain is Small ribosomal subunit protein uS11 (128 aa).

Belongs to the universal ribosomal protein uS11 family. In terms of assembly, part of the 30S ribosomal subunit. Interacts with proteins S7 and S18. Binds to IF-3.

Functionally, located on the platform of the 30S subunit, it bridges several disparate RNA helices of the 16S rRNA. Forms part of the Shine-Dalgarno cleft in the 70S ribosome. The protein is Small ribosomal subunit protein uS11 of Acinetobacter baylyi (strain ATCC 33305 / BD413 / ADP1).